The sequence spans 517 residues: PSTB2-interacting protein 1 (517 aa).

Interacts with PDR17/PSTB2 and SCS2.

Its function is as follows. Phosphatidic acid-binding protein involved in interorganelle phosphatidylserine (PtdSer) transport. Linkks a PtdSer donor membrane (via binding of SCS2 and phosphatidic acid present in the donor membrane) with an acceptor membrane (via its interaction with PDR17), forming a zone of apposition that facilitates PtdSer transfer. In Saccharomyces cerevisiae (strain ATCC 204508 / S288c) (Baker's yeast), this protein is PSTB2-interacting protein 1.